Reading from the N-terminus, the 63-residue chain is Movement protein TGBp3 (63 aa).

A helical membrane pass occupies residues 1-21; the sequence is MIVYVLVGLSAFCIVLYLISQ. Over 22-63 the chain is Cytoplasmic; that stretch reads GQSDCVVLITGESVRVQGCRIDGEFGSVLSKLKPFGCGSFRS.

The protein belongs to the Tymovirales TGBp3 protein family.

The protein localises to the host endoplasmic reticulum membrane. Its function is as follows. Plays a role in viral cell-to-cell propagation, by facilitating genome transport to neighboring plant cells through plasmosdesmata. May induce the formation of granular vesicles derived from the Endoplasmic reticulum, which align on actin filaments. The chain is Movement protein TGBp3 from Solanum tuberosum (Potato).